A 60-amino-acid chain; its full sequence is Large ribosomal subunit protein bL32 (60 aa).

The protein belongs to the bacterial ribosomal protein bL32 family.

This is Large ribosomal subunit protein bL32 from Synechococcus sp. (strain JA-3-3Ab) (Cyanobacteria bacterium Yellowstone A-Prime).